Reading from the N-terminus, the 365-residue chain is Succinyl-diaminopimelate desuccinylase (365 aa).

Histidine 64 is a Zn(2+) binding site. Residue aspartate 66 is part of the active site. Aspartate 95 is a Zn(2+) binding site. Catalysis depends on glutamate 125, which acts as the Proton acceptor. Glutamate 126, glutamate 154, and histidine 339 together coordinate Zn(2+).

It belongs to the peptidase M20A family. DapE subfamily. In terms of assembly, homodimer. Zn(2+) is required as a cofactor. It depends on Co(2+) as a cofactor.

It catalyses the reaction N-succinyl-(2S,6S)-2,6-diaminopimelate + H2O = (2S,6S)-2,6-diaminopimelate + succinate. It functions in the pathway amino-acid biosynthesis; L-lysine biosynthesis via DAP pathway; LL-2,6-diaminopimelate from (S)-tetrahydrodipicolinate (succinylase route): step 3/3. Its function is as follows. Catalyzes the hydrolysis of N-succinyl-L,L-diaminopimelic acid (SDAP), forming succinate and LL-2,6-diaminopimelate (DAP), an intermediate involved in the bacterial biosynthesis of lysine and meso-diaminopimelic acid, an essential component of bacterial cell walls. The sequence is that of Succinyl-diaminopimelate desuccinylase from Campylobacter curvus (strain 525.92).